The following is a 283-amino-acid chain: Cyclin-C (283 aa).

Residues 46–144 (NVIQALGEHL…ILECEFYLLE (99 aa)) form the Cyclin N-terminal domain. The segment at 252–283 (TILSKMPKPKPPPNSEGEQGPNGSQNSSYSQS) is disordered. Polar residues predominate over residues 272–283 (PNGSQNSSYSQS).

The protein belongs to the cyclin family. Cyclin C subfamily. In terms of assembly, component of the Mediator complex. The cylin/CDK pair formed by CCNC/CDK8 also associates with the large subunit of RNA polymerase II.

It is found in the nucleus. Component of the Mediator complex, a coactivator involved in regulated gene transcription of nearly all RNA polymerase II-dependent genes. Mediator functions as a bridge to convey information from gene-specific regulatory proteins to the basal RNA polymerase II transcription machinery. Mediator is recruited to promoters by direct interactions with regulatory proteins and serves as a scaffold for the assembly of a functional preinitiation complex with RNA polymerase II and the general transcription factors. Binds to and activates cyclin-dependent kinase CDK8 that phosphorylates the CTD (C-terminal domain) of the large subunit of RNA polymerase II (RNAp II), which may inhibit the formation of a transcription initiation complex. The sequence is that of Cyclin-C (CCNC) from Gallus gallus (Chicken).